The chain runs to 186 residues: Casparian strip membrane protein 3 (186 aa).

At 1 to 26 (MKAGALELGEGSKTSIPRGGVNRGIS) the chain is on the cytoplasmic side. Residues 27–47 (ILDFILRLITIIGTLGSAIAM) traverse the membrane as a helical segment. Topologically, residues 48 to 74 (GTTNETLPFFTQFTQFRAEYDDLPTFT) are extracellular. N-linked (GlcNAc...) asparagine glycosylation is present at N51. A helical transmembrane segment spans residues 75–95 (FFVIANSIVSGYLVLSLPMSI). At 96 to 107 (LHIVRSGARASR) the chain is on the cytoplasmic side. Residues 108 to 128 (IVLIFFDTAMLALLTAAASAA) traverse the membrane as a helical segment. The Extracellular segment spans residues 129-161 (SAIVYLAHKGNAQANWFAICQQFKSFCERISGS). A helical transmembrane segment spans residues 162–182 (LIGSFGGIILFILLVLLSAVA). Topologically, residues 183–186 (LSRC) are cytoplasmic.

The protein belongs to the Casparian strip membrane proteins (CASP) family. Homodimer and heterodimers.

It is found in the cell membrane. Functionally, regulates membrane-cell wall junctions and localized cell wall deposition. Required for establishment of the Casparian strip membrane domain (CSD) and the subsequent formation of Casparian strips, a cell wall modification of the root endodermis that determines an apoplastic barrier between the intraorganismal apoplasm and the extraorganismal apoplasm and prevents lateral diffusion. In Vitis vinifera (Grape), this protein is Casparian strip membrane protein 3.